The sequence spans 488 residues: Zinc metalloproteinase-disintegrin 8 (488 aa).

The N-terminal stretch at 1 to 20 (MIQVLLVTICLAVFPYQGSS) is a signal peptide. The propeptide occupies 21–191 (IILESGNVND…KASQLNLPPE (171 aa)). The region spanning 198–396 (TYIELVVVAD…STTRCLHNEP (199 aa)) is the Peptidase M12B domain. Ca(2+) is bound by residues Glu201 and Asp285. An N-linked (GlcNAc...) asparagine glycan is attached at Asn296. 3 disulfide bridges follow: Cys309/Cys391, Cys349/Cys373, and Cys351/Cys356. Residue His334 participates in Zn(2+) binding. The active site involves Glu335. 2 residues coordinate Zn(2+): His338 and His344. Positions 391, 394, 409, 413, 416, and 419 each coordinate Ca(2+). Positions 404-488 (PPFCGNYFKE…ADCPRNGLYG (85 aa)) constitute a Disintegrin domain. Cystine bridges form between Cys407–Cys426, Cys418–Cys436, Cys420–Cys431, Cys430–Cys453, Cys444–Cys450, Cys449–Cys474, and Cys462–Cys481. Positions 466–468 (RGD) match the Cell attachment site motif.

The protein belongs to the venom metalloproteinase (M12B) family. P-II subfamily. Zn(2+) is required as a cofactor. Expressed by the venom gland.

The protein localises to the secreted. Its function is as follows. Inhibits ADP-induced platelet aggregation (probably by binding integrin alpha-IIb/beta-3 (ITGA2B/ITGB3)) and degrades fibrinogen. This chain is Zinc metalloproteinase-disintegrin 8, found in Crotalus adamanteus (Eastern diamondback rattlesnake).